We begin with the raw amino-acid sequence, 141 residues long: MVNDTISDMLTRIRNANMAKNDLVLIPFTHINLEICQILLKEGFIQSFKTLTLDVSKYSKLNAQKNLNIVVKLKYLGRQKNSCITNLLRISKPGNRIYAKHKIPDMLGGLGIIIVSTSAGIMTDREAREQKIGGELLCSVW.

It belongs to the universal ribosomal protein uS8 family. In terms of assembly, part of the 30S ribosomal subunit.

It localises to the plastid. The protein localises to the chloroplast. In terms of biological role, one of the primary rRNA binding proteins, it binds directly to 16S rRNA central domain where it helps coordinate assembly of the platform of the 30S subunit. This is Small ribosomal subunit protein uS8c (rps8) from Pleurastrum terricola (Filamentous green alga).